Reading from the N-terminus, the 296-residue chain is UPF0761 membrane protein YE0031 (296 aa).

The next 7 helical transmembrane spans lie at 44–64, 67–87, 108–128, 136–156, 185–205, 212–232, and 246–266; these read LLSLVPLVTVIFALFAAFPMF, ISIKLKAFIFTNFMPATGDII, GLIVTALLLIYSVDSVLNIIW, LVFSFAVYWMVLTLGPILVGA, LFPLLISWVSFWLLYSVVPTV, ALIGALVAALFFELGKKGFTM, and VLAVIPILFLWVYWSWCIVLL.

The protein belongs to the UPF0761 family.

It is found in the cell inner membrane. The chain is UPF0761 membrane protein YE0031 from Yersinia enterocolitica serotype O:8 / biotype 1B (strain NCTC 13174 / 8081).